A 169-amino-acid chain; its full sequence is Crossover junction endodeoxyribonuclease RuvC (169 aa).

Catalysis depends on residues Asp-11, Glu-71, and Asp-143. Mg(2+) contacts are provided by Asp-11, Glu-71, and Asp-143.

It belongs to the RuvC family. Homodimer which binds Holliday junction (HJ) DNA. The HJ becomes 2-fold symmetrical on binding to RuvC with unstacked arms; it has a different conformation from HJ DNA in complex with RuvA. In the full resolvosome a probable DNA-RuvA(4)-RuvB(12)-RuvC(2) complex forms which resolves the HJ. It depends on Mg(2+) as a cofactor.

It localises to the cytoplasm. It carries out the reaction Endonucleolytic cleavage at a junction such as a reciprocal single-stranded crossover between two homologous DNA duplexes (Holliday junction).. The RuvA-RuvB-RuvC complex processes Holliday junction (HJ) DNA during genetic recombination and DNA repair. Endonuclease that resolves HJ intermediates. Cleaves cruciform DNA by making single-stranded nicks across the HJ at symmetrical positions within the homologous arms, yielding a 5'-phosphate and a 3'-hydroxyl group; requires a central core of homology in the junction. The consensus cleavage sequence is 5'-(A/T)TT(C/G)-3'. Cleavage occurs on the 3'-side of the TT dinucleotide at the point of strand exchange. HJ branch migration catalyzed by RuvA-RuvB allows RuvC to scan DNA until it finds its consensus sequence, where it cleaves and resolves the cruciform DNA. In Rhizobium etli (strain ATCC 51251 / DSM 11541 / JCM 21823 / NBRC 15573 / CFN 42), this protein is Crossover junction endodeoxyribonuclease RuvC.